The chain runs to 273 residues: Dermonecrotic toxin LhSicTox-alphaIA2biv (273 aa).

The active site involves His-5. Mg(2+) is bound by residues Glu-25 and Asp-27. Residue His-41 is the Nucleophile of the active site. 2 disulfides stabilise this stretch: Cys-45–Cys-51 and Cys-47–Cys-190. Asp-85 contributes to the Mg(2+) binding site.

This sequence belongs to the arthropod phospholipase D family. Class II subfamily. The cofactor is Mg(2+). In terms of tissue distribution, expressed by the venom gland.

The protein resides in the secreted. It catalyses the reaction an N-(acyl)-sphingosylphosphocholine = an N-(acyl)-sphingosyl-1,3-cyclic phosphate + choline. It carries out the reaction an N-(acyl)-sphingosylphosphoethanolamine = an N-(acyl)-sphingosyl-1,3-cyclic phosphate + ethanolamine. The enzyme catalyses a 1-acyl-sn-glycero-3-phosphocholine = a 1-acyl-sn-glycero-2,3-cyclic phosphate + choline. The catalysed reaction is a 1-acyl-sn-glycero-3-phosphoethanolamine = a 1-acyl-sn-glycero-2,3-cyclic phosphate + ethanolamine. Functionally, dermonecrotic toxins cleave the phosphodiester linkage between the phosphate and headgroup of certain phospholipids (sphingolipid and lysolipid substrates), forming an alcohol (often choline) and a cyclic phosphate. This toxin acts on sphingomyelin (SM). It may also act on ceramide phosphoethanolamine (CPE), lysophosphatidylcholine (LPC) and lysophosphatidylethanolamine (LPE), but not on lysophosphatidylserine (LPS), and lysophosphatidylglycerol (LPG). It acts by transphosphatidylation, releasing exclusively cyclic phosphate products as second products. Induces dermonecrosis, hemolysis, increased vascular permeability, edema, inflammatory response, and platelet aggregation. The chain is Dermonecrotic toxin LhSicTox-alphaIA2biv from Loxosceles hirsuta (Recluse spider).